A 645-amino-acid polypeptide reads, in one-letter code: Threonine--tRNA ligase (645 aa).

The region spanning 1-63 (MEQINIQFPD…ETDGSIEIVT (63 aa)) is the TGS domain. The tract at residues 242 to 540 (DHRKIGKELE…LTEETKGAFP (299 aa)) is catalytic. Positions 336, 387, and 517 each coordinate Zn(2+).

It belongs to the class-II aminoacyl-tRNA synthetase family. As to quaternary structure, homodimer. Zn(2+) is required as a cofactor.

The protein localises to the cytoplasm. It carries out the reaction tRNA(Thr) + L-threonine + ATP = L-threonyl-tRNA(Thr) + AMP + diphosphate + H(+). Its function is as follows. Catalyzes the attachment of threonine to tRNA(Thr) in a two-step reaction: L-threonine is first activated by ATP to form Thr-AMP and then transferred to the acceptor end of tRNA(Thr). Also edits incorrectly charged L-seryl-tRNA(Thr). This is Threonine--tRNA ligase from Staphylococcus aureus (strain NCTC 8325 / PS 47).